The chain runs to 353 residues: MKFLDEAKVYIRSGDGGNGCVAFRREKFIEFGGPNGGNGGRGGDVVVEAADGLNTLIDYRYQQHFKAQKGVNGMGSDRHGANGKDIVLKVPVGTQIIDEDKETLLHDFTKVGERFVLAEGGNGGFGNAHFKSSTNRAPRHANPGLPGEERWIWLRLKLIADAGLVGLPNAGKSTFLSKVSAAKPKIADYPFTTLHPQLGVVNSDGREFVLADIPGLIEGAHEGAGLGDRFLGHVERCRVLLHLIDATCEHAGKAYKTVRGELEAYADTLTDKIEIVALNKIDAVEPDELKKQKDRLKRAAKKTPLLISGVTGAGVPEALRALAAVIGEAPVSDKAIGTAQNAADAKPWAPQDV.

The Obg domain maps to 1–159 (MKFLDEAKVY…RWIWLRLKLI (159 aa)). Residues 160–327 (ADAGLVGLPN…ALRALAAVIG (168 aa)) enclose the OBG-type G domain. GTP contacts are provided by residues 166–173 (GLPNAGKS), 191–195 (FTTLH), 212–215 (DIPG), 279–282 (NKID), and 308–310 (SGV). Ser-173 and Thr-193 together coordinate Mg(2+).

It belongs to the TRAFAC class OBG-HflX-like GTPase superfamily. OBG GTPase family. In terms of assembly, monomer. Requires Mg(2+) as cofactor.

The protein localises to the cytoplasm. An essential GTPase which binds GTP, GDP and possibly (p)ppGpp with moderate affinity, with high nucleotide exchange rates and a fairly low GTP hydrolysis rate. Plays a role in control of the cell cycle, stress response, ribosome biogenesis and in those bacteria that undergo differentiation, in morphogenesis control. The sequence is that of GTPase Obg from Rhodopseudomonas palustris (strain BisB5).